The sequence spans 258 residues: D-aminoacyl-tRNA deacylase (258 aa).

Belongs to the DtdA deacylase family. In terms of assembly, monomer. Requires Zn(2+) as cofactor.

It carries out the reaction a D-aminoacyl-tRNA + H2O = a tRNA + a D-alpha-amino acid + H(+). The enzyme catalyses glycyl-tRNA(Ala) + H2O = tRNA(Ala) + glycine + H(+). In terms of biological role, D-aminoacyl-tRNA deacylase with broad substrate specificity. By recycling D-aminoacyl-tRNA to D-amino acids and free tRNA molecules, this enzyme counteracts the toxicity associated with the formation of D-aminoacyl-tRNA entities in vivo. The sequence is that of D-aminoacyl-tRNA deacylase from Cenarchaeum symbiosum (strain A).